The chain runs to 702 residues: Elongation factor G (702 aa).

Residues 8–290 form the tr-type G domain; that stretch reads SRYRNIGISA…AIIEFLPAPN (283 aa). GTP is bound by residues 17–24, 88–92, and 142–145; these read AHIDAGKT, DTPGH, and NKMD.

Belongs to the TRAFAC class translation factor GTPase superfamily. Classic translation factor GTPase family. EF-G/EF-2 subfamily.

The protein localises to the cytoplasm. In terms of biological role, catalyzes the GTP-dependent ribosomal translocation step during translation elongation. During this step, the ribosome changes from the pre-translocational (PRE) to the post-translocational (POST) state as the newly formed A-site-bound peptidyl-tRNA and P-site-bound deacylated tRNA move to the P and E sites, respectively. Catalyzes the coordinated movement of the two tRNA molecules, the mRNA and conformational changes in the ribosome. This chain is Elongation factor G, found in Buchnera aphidicola subsp. Acyrthosiphon pisum (strain 5A).